A 127-amino-acid polypeptide reads, in one-letter code: Oleate-induced peroxisomal protein POX18 (127 aa).

The 106-residue stretch at 14 to 119 (FKELHEGLAD…KATAIESVFK (106 aa)) folds into the SCP2 domain. The interval 33-41 (AVNAVIVIT) is hydrophobic. Residues 43 to 52 (KNKEGKEQSW) are hydrophilic.

Monomer.

The protein localises to the peroxisome. The protein operates within lipid metabolism; fatty acid metabolism. In terms of biological role, is involved in beta-oxidation of long-chain fatty acids. Its exact function is unknown, but possesses a nonspecific lipid-transfer activity, despite the absence of a cysteine residue thought to be essential for the activity of its mammalian counterparts. The protein is Oleate-induced peroxisomal protein POX18 (POX18) of Candida maltosa (Yeast).